The sequence spans 307 residues: Undecaprenyl-diphosphatase 2 (307 aa).

The next 8 helical transmembrane spans lie at 19 to 41 (GVTE…IIGF), 56 to 76 (IHMF…VLYW), 117 to 137 (FKFW…GLPF), 144 to 164 (LLFF…WMIF), 208 to 228 (IIGA…SFFL), 229 to 249 (AIPM…VVLS), 251 to 271 (VQIL…LVVV), and 285 to 305 (IFAV…FTKV).

Belongs to the UppP family.

It localises to the cell membrane. The enzyme catalyses di-trans,octa-cis-undecaprenyl diphosphate + H2O = di-trans,octa-cis-undecaprenyl phosphate + phosphate + H(+). Catalyzes the dephosphorylation of undecaprenyl diphosphate (UPP). Confers resistance to bacitracin. The sequence is that of Undecaprenyl-diphosphatase 2 from Clostridium acetobutylicum (strain ATCC 824 / DSM 792 / JCM 1419 / IAM 19013 / LMG 5710 / NBRC 13948 / NRRL B-527 / VKM B-1787 / 2291 / W).